The primary structure comprises 482 residues: ATP synthase subunit beta (482 aa).

162–169 (GGAGVGKT) is an ATP binding site.

It belongs to the ATPase alpha/beta chains family. In terms of assembly, F-type ATPases have 2 components, CF(1) - the catalytic core - and CF(0) - the membrane proton channel. CF(1) has five subunits: alpha(3), beta(3), gamma(1), delta(1), epsilon(1). CF(0) has four main subunits: a(1), b(1), b'(1) and c(9-12).

The protein resides in the cellular thylakoid membrane. It carries out the reaction ATP + H2O + 4 H(+)(in) = ADP + phosphate + 5 H(+)(out). Produces ATP from ADP in the presence of a proton gradient across the membrane. The catalytic sites are hosted primarily by the beta subunits. The sequence is that of ATP synthase subunit beta from Nostoc sp. (strain PCC 7120 / SAG 25.82 / UTEX 2576).